Here is a 701-residue protein sequence, read N- to C-terminus: MSADKLYIDKELSWLSFNERVLQEAADKTVPLIERIRFLGIFSNNLDEFYKVRFADVKRQILINRERGGNDISKHLLSRMQSKALKLNQDFDNLYNELILEMARRRIFLVNETQLDEIQLKWVKKYFHKEVLPHVTPIMLRDDIDVMQFLKDEYAYIAVEMRSGDEFKYALIEIPTDQLPRFVMLPEQKGKRRKTIILLDNIIRLCLDEIFRGFYDYDTLNGYAMKMTRDAEYDLRHEVEYSLLEQMSEGLSQRLTALPVRFVYEREMPEAMLKFLCYKLKISHYDSLIPGGRYHNFKDFISFPNVGRDYLENKPLPPMTCADFEGYANAFDAIRAQDILLHYPYHSFEHMTELVRQASFDPKVVSIKINIYRVAKDSKLMNSLVDAVHNGKRVVVVVELQARFDEEANIEWSRILTDAGVHVIFGVPGMKIHAKLLLITRKEGDEFVRYAHIGTGNFHERTARIYTDFALLTANQELAAEVRAVFGYIENPFRPVKFNHLIVSPRNSRTQIYRLLDSEIANAKAGKKAAITLKVNNLVDKGLINKLYGASAAGVKIRMIIRGMCSLVPGVEGVSDNIEIISIIDRFLEHPRVLVVHNDGNPQVFISSADWMERNIDHRIEVMAPIRDERLKQRIIDILNIQFIDTVKARRIDKEMSNQYVERGNRRKVRSQIAIYDYLKNVEKQTRKAKGQQETNDNSSQ.

Asn-45 is a binding site for ATP. Arg-373 and Arg-403 together coordinate Mg(2+). The 35-residue stretch at 428 to 462 (PGMKIHAKLLLITRKEGDEFVRYAHIGTGNFHERT) folds into the PLD phosphodiesterase 1 domain. His-433 acts as the Phosphohistidine intermediate in catalysis. Residues Tyr-466, Arg-562, and His-590 each contribute to the ATP site. Residues 585 to 615 (DRFLEHPRVLVVHNDGNPQVFISSADWMERN) form the PLD phosphodiesterase 2 domain.

The protein belongs to the polyphosphate kinase 1 (PPK1) family. The cofactor is Mg(2+). An intermediate of this reaction is the autophosphorylated ppk in which a phosphate is covalently linked to a histidine residue through a N-P bond.

It catalyses the reaction [phosphate](n) + ATP = [phosphate](n+1) + ADP. Its function is as follows. Catalyzes the reversible transfer of the terminal phosphate of ATP to form a long-chain polyphosphate (polyP). In Vibrio cholerae serotype O1 (strain ATCC 39315 / El Tor Inaba N16961), this protein is Polyphosphate kinase.